The sequence spans 20 residues: Short cationic peptide-4c (20 aa).

Glu-20 is modified (glutamic acid 1-amide).

Expressed by the venom gland.

Its subcellular location is the secreted. The sequence is that of Short cationic peptide-4c from Cupiennius salei (American wandering spider).